The sequence spans 103 residues: Putative double-stranded DNA mimic protein HAPS_1002 (103 aa).

Belongs to the putative dsDNA mimic protein family.

May act as a double-stranded DNA (dsDNA) mimic. Probably regulates the activity of a dsDNA-binding protein. The sequence is that of Putative double-stranded DNA mimic protein HAPS_1002 from Glaesserella parasuis serovar 5 (strain SH0165) (Haemophilus parasuis).